The sequence spans 345 residues: Phosphoribosylformylglycinamidine cyclo-ligase (345 aa).

The protein belongs to the AIR synthase family.

Its subcellular location is the cytoplasm. The enzyme catalyses 2-formamido-N(1)-(5-O-phospho-beta-D-ribosyl)acetamidine + ATP = 5-amino-1-(5-phospho-beta-D-ribosyl)imidazole + ADP + phosphate + H(+). The protein operates within purine metabolism; IMP biosynthesis via de novo pathway; 5-amino-1-(5-phospho-D-ribosyl)imidazole from N(2)-formyl-N(1)-(5-phospho-D-ribosyl)glycinamide: step 2/2. This Synechococcus sp. (strain CC9902) protein is Phosphoribosylformylglycinamidine cyclo-ligase.